The chain runs to 177 residues: Large ribosomal subunit protein uL6 (177 aa).

This sequence belongs to the universal ribosomal protein uL6 family. Part of the 50S ribosomal subunit.

This protein binds to the 23S rRNA, and is important in its secondary structure. It is located near the subunit interface in the base of the L7/L12 stalk, and near the tRNA binding site of the peptidyltransferase center. The protein is Large ribosomal subunit protein uL6 of Cupriavidus pinatubonensis (strain JMP 134 / LMG 1197) (Cupriavidus necator (strain JMP 134)).